Consider the following 694-residue polypeptide: Elongation factor G (694 aa).

One can recognise a tr-type G domain in the interval 9–288 (DAIRNIGIMA…VIVKWLPSPL (280 aa)). GTP is bound by residues 18–25 (AHIDAGKT), 82–86 (DTPGH), and 136–139 (NKMD).

The protein belongs to the TRAFAC class translation factor GTPase superfamily. Classic translation factor GTPase family. EF-G/EF-2 subfamily.

It localises to the cytoplasm. Catalyzes the GTP-dependent ribosomal translocation step during translation elongation. During this step, the ribosome changes from the pre-translocational (PRE) to the post-translocational (POST) state as the newly formed A-site-bound peptidyl-tRNA and P-site-bound deacylated tRNA move to the P and E sites, respectively. Catalyzes the coordinated movement of the two tRNA molecules, the mRNA and conformational changes in the ribosome. This chain is Elongation factor G, found in Chlamydia trachomatis serovar L2 (strain ATCC VR-902B / DSM 19102 / 434/Bu).